Reading from the N-terminus, the 450-residue chain is Tol-Pal system protein TolB (450 aa).

Residues 1-37 (MIERNGLQRMPFRLNRRHMISGMASAAVLLGSRQALG) form the signal peptide.

The protein belongs to the TolB family. As to quaternary structure, the Tol-Pal system is composed of five core proteins: the inner membrane proteins TolA, TolQ and TolR, the periplasmic protein TolB and the outer membrane protein Pal. They form a network linking the inner and outer membranes and the peptidoglycan layer.

It localises to the periplasm. In terms of biological role, part of the Tol-Pal system, which plays a role in outer membrane invagination during cell division and is important for maintaining outer membrane integrity. This is Tol-Pal system protein TolB from Nitrobacter winogradskyi (strain ATCC 25391 / DSM 10237 / CIP 104748 / NCIMB 11846 / Nb-255).